The chain runs to 163 residues: Putative protein CASTOR3P (163 aa).

The protein belongs to the GATS family.

The polypeptide is Putative protein CASTOR3P (Homo sapiens (Human)).